A 402-amino-acid chain; its full sequence is Selenoprotein P (402 aa).

The signal sequence occupies residues 1–19 (MWRGLGLALALCLLLTGGT). Sec59 is a non-standard amino acid (selenocysteine). N-linked (GlcNAc...) asparagine glycans are attached at residues Asn83 and Asn174. The interval 196–291 (KTAEASQRHH…VGSESLQPSL (96 aa)) is disordered. Residues 203 to 231 (RHHHPHPHSHPHPHPHPHPHPHPHPHHGH) show a composition bias toward basic residues. 13 tandem repeats follow at residues 204-205 (HH), 206-207 (HP), 208-209 (HP), 210-211 (HS), 212-213 (HP), 214-215 (HP), 216-217 (HP), 218-219 (HP), 220-221 (HP), 222-223 (HP), 224-225 (HP), 226-227 (HP), and 228-229 (HH). A 13 X 2 AA tandem repeats of H-[PHS] region spans residues 204–229 (HHHPHPHSHPHPHPHPHPHPHPHPHH). A compositionally biased stretch (basic and acidic residues) spans 232–247 (QLHENAHLSESPKPDT). A compositionally biased stretch (basic residues) spans 259–269 (LHHHHHRHKGP). Ser284 is modified (phosphoserine). 11 non-standard amino acids (selenocysteine) are found at residues Sec297, Sec307, Sec338, Sec350, Sec363, Sec365, Sec372, Sec388, Sec390, Sec397, and Sec399. The disordered stretch occupies residues 367–402 (LPPAAUQAAGQQLNPTEASTKUSUKNKAKMUKUPSN).

It belongs to the selenoprotein P family. Post-translationally, phosphorylation sites are present in the extracellular medium. In terms of tissue distribution, brain and kidney. Most prominently expressed in the cerebellar cortex, hippocampus and olfactory bulb.

The protein localises to the secreted. Constitutes a major selenium pool in the brain and may play an important role in developing and/or modulating the morphology of neurons and/or glial cells. This chain is Selenoprotein P, found in Bos taurus (Bovine).